Reading from the N-terminus, the 263-residue chain is 4-hydroxy-2-oxo-heptane-1,7-dioate aldolase (263 aa).

His-45 serves as the catalytic Proton acceptor. Position 147 (Gln-147) interacts with substrate. Glu-149 contacts a divalent metal cation. Residues Ala-174 and Asp-175 each contribute to the substrate site. Asp-175 is an a divalent metal cation binding site.

The protein belongs to the HpcH/HpaI aldolase family. As to quaternary structure, homohexamer; trimer of dimers. A divalent metal cation is required as a cofactor.

The enzyme catalyses 4-hydroxy-2-oxoheptanedioate = succinate semialdehyde + pyruvate. Its pathway is aromatic compound metabolism; 4-hydroxyphenylacetate degradation; pyruvate and succinate semialdehyde from 4-hydroxyphenylacetate: step 7/7. Catalyzes the reversible retro-aldol cleavage of 4-hydroxy-2-ketoheptane-1,7-dioate (HKHD) to pyruvate and succinic semialdehyde. This is 4-hydroxy-2-oxo-heptane-1,7-dioate aldolase from Salmonella arizonae (strain ATCC BAA-731 / CDC346-86 / RSK2980).